The following is a 243-amino-acid chain: Leucyl/phenylalanyl-tRNA--protein transferase (243 aa).

The protein belongs to the L/F-transferase family.

The protein localises to the cytoplasm. It catalyses the reaction N-terminal L-lysyl-[protein] + L-leucyl-tRNA(Leu) = N-terminal L-leucyl-L-lysyl-[protein] + tRNA(Leu) + H(+). The enzyme catalyses N-terminal L-arginyl-[protein] + L-leucyl-tRNA(Leu) = N-terminal L-leucyl-L-arginyl-[protein] + tRNA(Leu) + H(+). The catalysed reaction is L-phenylalanyl-tRNA(Phe) + an N-terminal L-alpha-aminoacyl-[protein] = an N-terminal L-phenylalanyl-L-alpha-aminoacyl-[protein] + tRNA(Phe). Its function is as follows. Functions in the N-end rule pathway of protein degradation where it conjugates Leu, Phe and, less efficiently, Met from aminoacyl-tRNAs to the N-termini of proteins containing an N-terminal arginine or lysine. The protein is Leucyl/phenylalanyl-tRNA--protein transferase of Vibrio cholerae serotype O1 (strain ATCC 39541 / Classical Ogawa 395 / O395).